The chain runs to 392 residues: GPI alpha-1,4-mannosyltransferase I, catalytic subunit (392 aa).

Topologically, residues 1–4 (MEAR) are cytoplasmic. The chain crosses the membrane as a helical span at residues 5–25 (VCVLFGAAALLRLLLLCVGVY). Over 26–65 (QDQTLKLKYTDVDYHVFTDAARFITQGESPYRRSTFRYTP) the chain is Lumenal. The helical transmembrane segment at 66–86 (LLALLLVPNVYLSLLFGKLLF) threads the bilayer. Residues 87-125 (GFCDLLSGLLMFRLLVLRGASHGSACVSCGLWLLNPLPM) lie on the Cytoplasmic side of the membrane. Residues 126-148 (AVSTRGNAESVLAVLVLSTLLCL) traverse the membrane as a helical segment. The Lumenal portion of the chain corresponds to 149–156 (QLRKHTTA). Residues 157 to 177 (ALLFGLSVHMKIYPVTYALPI) traverse the membrane as a helical segment. The Cytoplasmic segment spans residues 178–198 (ALALTAAPARGRGVLLRFFSP). A helical transmembrane segment spans residues 199–219 (ALLRFAAVSAAVFLSLGLIFY). The Lumenal segment spans residues 220–261 (CRYGWEFLQEAYLYHLTRRDLRHNFSPFFYLQYVCAERCWSS). Residues 262 to 282 (GLLPLLLLPQLLLLLLASAAF) traverse the membrane as a helical segment. Topologically, residues 283-302 (SSDLPFCCFLHTAVFVSFNR) are cytoplasmic. The helical transmembrane segment at 303–323 (VCTSQYFLWYLCLLPVVLPRL) threads the bilayer. The Lumenal portion of the chain corresponds to 324–330 (RLRLGRG). A helical transmembrane segment spans residues 331–351 (LLLLLLWLLLQGLWLAPAYLL). The Cytoplasmic portion of the chain corresponds to 352–360 (EFQGWNSFS). Residues 361 to 381 (WIWAASLLFLLTNTFILAQII) traverse the membrane as a helical segment. Topologically, residues 382–392 (QHYRPHDRKAD) are lumenal.

It belongs to the PIGM family. Part of the glycosylphosphatidylinositol-mannosyltransferase I complex that is composed of PIGM and PIGX.

The protein localises to the endoplasmic reticulum membrane. It functions in the pathway glycolipid biosynthesis; glycosylphosphatidylinositol-anchor biosynthesis. Catalytic subunit of the glycosylphosphatidylinositol-mannosyltransferase I complex which catalyzes the transfer of the first mannose, via an alpha-1,4 bond from a dolichol-phosphate-mannose (Dol-P-Man) to the glucosaminyl acyl phosphatidylinositol (GlcN-(acyl)PI) intermediate to generate alpha-D-Man-(1-&gt;4)-alpha-D-GlcN-(1-&gt;6)-(1-radyl,2-acyl-sn-glycero-3-phospho)-2-acyl-inositol and participates in the sixth step of the glycosylphosphatidylinositol-anchor biosynthesis. The sequence is that of GPI alpha-1,4-mannosyltransferase I, catalytic subunit from Danio rerio (Zebrafish).